Consider the following 211-residue polypeptide: Urease accessory protein UreG (211 aa).

11–18 lines the GTP pocket; it reads GPVGSGKT.

Belongs to the SIMIBI class G3E GTPase family. UreG subfamily. In terms of assembly, homodimer. UreD, UreF and UreG form a complex that acts as a GTP-hydrolysis-dependent molecular chaperone, activating the urease apoprotein by helping to assemble the nickel containing metallocenter of UreC. The UreE protein probably delivers the nickel.

Its subcellular location is the cytoplasm. Its function is as follows. Facilitates the functional incorporation of the urease nickel metallocenter. This process requires GTP hydrolysis, probably effectuated by UreG. This Photorhabdus laumondii subsp. laumondii (strain DSM 15139 / CIP 105565 / TT01) (Photorhabdus luminescens subsp. laumondii) protein is Urease accessory protein UreG.